Reading from the N-terminus, the 73-residue chain is Large ribosomal subunit protein bL31 (73 aa).

Belongs to the bacterial ribosomal protein bL31 family. Type A subfamily. Part of the 50S ribosomal subunit.

Functionally, binds the 23S rRNA. This Allorhizobium ampelinum (strain ATCC BAA-846 / DSM 112012 / S4) (Agrobacterium vitis (strain S4)) protein is Large ribosomal subunit protein bL31.